A 374-amino-acid chain; its full sequence is Arf-GAP with dual PH domain-containing protein 1 (374 aa).

Positions R7 to P126 constitute an Arf-GAP domain. The C4-type zinc finger occupies C21–C44. S87 is modified (phosphoserine; by PKC). 2 consecutive PH domains span residues A129–F230 and N252–D356. K272 is modified (N6-acetyllysine). T276 is subject to Phosphothreonine; by PKC.

Interacts with PRKCA, PRKCI and PRKCZ. Interacts with the N-terminal region of PRKD1. In terms of processing, phosphorylated by PRKCA, PRKCI, PRKCZ and PRKD1 in vitro. Expressed at highest levels in brain and at lower levels in peripheral blood leukocytes.

It is found in the nucleus. The protein localises to the cytoplasm. GTPase-activating protein for the ADP ribosylation factor family. Binds phosphatidylinositol 3,4,5-trisphosphate (PtdInsP3) and inositol 1,3,4,5-tetrakisphosphate (InsP4). Regulates the incorporation of CD63 and CD9 into multivesicular bodies. The polypeptide is Arf-GAP with dual PH domain-containing protein 1 (ADAP1) (Homo sapiens (Human)).